A 295-amino-acid chain; its full sequence is Pyridoxal 5'-phosphate synthase subunit PdxS (295 aa).

D25 serves as a coordination point for D-ribose 5-phosphate. K82 serves as the catalytic Schiff-base intermediate with D-ribose 5-phosphate. G154 provides a ligand contact to D-ribose 5-phosphate. R166 serves as a coordination point for D-glyceraldehyde 3-phosphate. D-ribose 5-phosphate contacts are provided by residues G215 and 236 to 237 (GS).

Belongs to the PdxS/SNZ family. In the presence of PdxT, forms a dodecamer of heterodimers.

The enzyme catalyses aldehydo-D-ribose 5-phosphate + D-glyceraldehyde 3-phosphate + L-glutamine = pyridoxal 5'-phosphate + L-glutamate + phosphate + 3 H2O + H(+). It functions in the pathway cofactor biosynthesis; pyridoxal 5'-phosphate biosynthesis. Catalyzes the formation of pyridoxal 5'-phosphate from ribose 5-phosphate (RBP), glyceraldehyde 3-phosphate (G3P) and ammonia. The ammonia is provided by the PdxT subunit. Can also use ribulose 5-phosphate and dihydroxyacetone phosphate as substrates, resulting from enzyme-catalyzed isomerization of RBP and G3P, respectively. The protein is Pyridoxal 5'-phosphate synthase subunit PdxS of Heliobacterium modesticaldum (strain ATCC 51547 / Ice1).